Here is a 244-residue protein sequence, read N- to C-terminus: Phosphoadenosine 5'-phosphosulfate reductase (244 aa).

The active-site Nucleophile; cysteine thiosulfonate intermediate is C239.

Belongs to the PAPS reductase family. CysH subfamily.

It is found in the cytoplasm. It catalyses the reaction [thioredoxin]-disulfide + sulfite + adenosine 3',5'-bisphosphate + 2 H(+) = [thioredoxin]-dithiol + 3'-phosphoadenylyl sulfate. It participates in sulfur metabolism; hydrogen sulfide biosynthesis; sulfite from sulfate: step 3/3. Catalyzes the formation of sulfite from phosphoadenosine 5'-phosphosulfate (PAPS) using thioredoxin as an electron donor. This is Phosphoadenosine 5'-phosphosulfate reductase from Escherichia coli O6:K15:H31 (strain 536 / UPEC).